Consider the following 57-residue polypeptide: Granulin-3 (57 aa).

2 disulfide bridges follow: C4–C16 and C10–C26.

The protein belongs to the granulin family. In terms of processing, granulins are disulfide bridged. As to expression, ubiquitous.

It localises to the secreted. Granulins have possible cytokine-like activity. They may play a role in inflammation, wound repair, and tissue remodeling. The protein is Granulin-3 of Cyprinus carpio (Common carp).